Here is a 258-residue protein sequence, read N- to C-terminus: uncharacterized protein (258 aa).

Transmembrane regions (helical) follow at residues 14–34 (LAFPWLSAVILNSFLLALAAI), 53–73 (VIIWAALGWRGYLVVLAYFFV), 110–130 (AALCALAIAFGPEPWQLWLAL), 185–205 (GLALAVLGYGVGLISFGGIIF), and 238–258 (GINTFLGAAIAIGIEATAQLI).

Belongs to the TMEM19 family.

The protein localises to the cell membrane. This is an uncharacterized protein from Synechocystis sp. (strain ATCC 27184 / PCC 6803 / Kazusa).